Reading from the N-terminus, the 1047-residue chain is Carbamoyl phosphate synthase arginine-specific large chain (1047 aa).

The interval 1–401 (MPKRTDIQSV…GLQKAVRSLE (401 aa)) is carboxyphosphate synthetic domain. Residues arginine 129, arginine 169, glycine 175, glycine 176, lysine 208, isoleucine 210, glutamate 215, glycine 241, valine 242, histidine 243, glutamine 284, and glutamate 298 each contribute to the ATP site. One can recognise an ATP-grasp 1 domain in the interval 133-327 (RQLMHELHEP…IARMAAKLSL (195 aa)). 3 residues coordinate Mg(2+): glutamine 284, glutamate 298, and asparagine 300. The Mn(2+) site is built by glutamine 284, glutamate 298, and asparagine 300. Residues 402–549 (IKTHGLSLPS…YSSWTGENDL (148 aa)) are oligomerization domain. The interval 550 to 933 (LLPEKAKERV…AFRKAFAWGE (384 aa)) is carbamoyl phosphate synthetic domain. The 190-residue stretch at 676–865 (YEFMRSVEVP…LITYTIDVLF (190 aa)) folds into the ATP-grasp 2 domain. ATP contacts are provided by arginine 712, alanine 750, glutamate 756, glycine 781, valine 782, histidine 783, serine 784, glutamine 824, and glutamate 836. 3 residues coordinate Mg(2+): glutamine 824, glutamate 836, and asparagine 838. Residues glutamine 824, glutamate 836, and asparagine 838 each coordinate Mn(2+). The allosteric domain stretch occupies residues 934–1047 (EQTPALFRKK…PFLLPDVVMN (114 aa)). The 111-residue stretch at 937–1047 (PALFRKKGSV…PFLLPDVVMN (111 aa)) folds into the MGS-like domain.

Belongs to the CarB family. Composed of two chains; the small (or glutamine) chain promotes the hydrolysis of glutamine to ammonia, which is used by the large (or ammonia) chain to synthesize carbamoyl phosphate. Tetramer of heterodimers (alpha,beta)4. Requires Mg(2+) as cofactor. It depends on Mn(2+) as a cofactor.

It carries out the reaction hydrogencarbonate + L-glutamine + 2 ATP + H2O = carbamoyl phosphate + L-glutamate + 2 ADP + phosphate + 2 H(+). The catalysed reaction is hydrogencarbonate + NH4(+) + 2 ATP = carbamoyl phosphate + 2 ADP + phosphate + 2 H(+). It participates in amino-acid biosynthesis; L-arginine biosynthesis; carbamoyl phosphate from bicarbonate: step 1/1. Functionally, large subunit of the glutamine-dependent carbamoyl phosphate synthetase (CPSase). CPSase catalyzes the formation of carbamoyl phosphate from the ammonia moiety of glutamine, carbonate, and phosphate donated by ATP, constituting the first step of the biosynthetic pathway leading to arginine and/or urea. The large subunit (synthetase) binds the substrates ammonia (free or transferred from glutamine from the small subunit), hydrogencarbonate and ATP and carries out an ATP-coupled ligase reaction, activating hydrogencarbonate by forming carboxy phosphate which reacts with ammonia to form carbamoyl phosphate. The sequence is that of Carbamoyl phosphate synthase arginine-specific large chain from Halalkalibacterium halodurans (strain ATCC BAA-125 / DSM 18197 / FERM 7344 / JCM 9153 / C-125) (Bacillus halodurans).